The following is a 501-amino-acid chain: Flagellin (501 aa).

Belongs to the bacterial flagellin family.

The protein resides in the secreted. It localises to the bacterial flagellum. Its function is as follows. Flagellin is the subunit protein which polymerizes to form the filaments of bacterial flagella. In Aquifex pyrophilus, this protein is Flagellin (flaA).